The sequence spans 132 residues: Tail tube terminator protein (132 aa).

It belongs to the lambda-like tail terminator protein family. Homohexamer. May bind to major tail protein and /or tape measure protein.

The protein localises to the virion. It localises to the host cytoplasm. Plays an essential role in tail assembly by capping the rapidly polymerizing tail once it has reached its requisite length and serving as the interaction surface for the completion protein. The polypeptide is Tail tube terminator protein (Escherichia phage N15 (Bacteriophage N15)).